Reading from the N-terminus, the 297-residue chain is Dehydrodolichyl diphosphate synthase complex subunit Nus1 (297 aa).

The next 2 membrane-spanning stretches (helical) occupy residues 7-26 and 40-56; these read LVWR…TSWL and CCRA…GFTL. Basic residues predominate over residues 63–73; sequence GRNRRHHRHPH. The interval 63 to 86 is disordered; the sequence is GRNRRHHRHPHGGPGPGPGPAATH. The helical transmembrane segment at 121-139 threads the bilayer; it reads IASLVVWCMAVGISYISVY. N-linked (GlcNAc...) asparagine glycans are attached at residues Asn-148 and Asn-275. The RXG motif; crucial for prenyltransferase activity motif lies at 294–296; it reads RLG. Isopentenyl diphosphate contacts are provided by Leu-295 and Gly-296.

Belongs to the UPP synthase family. As to quaternary structure, the active dehydrodolichyl diphosphate synthase complex is a heterotetramer composed of a dimer of heterodimer of DHDDS and NUS1. Interacts with NPC2. Requires Mg(2+) as cofactor. Highly expressed in heart, liver, kidney and pancreas.

It localises to the endoplasmic reticulum membrane. It carries out the reaction n isopentenyl diphosphate + (2E,6E)-farnesyl diphosphate = a di-trans,poly-cis-polyprenyl diphosphate + n diphosphate. Its pathway is protein modification; protein glycosylation. It functions in the pathway lipid metabolism. In terms of biological role, with DHDDS, forms the dehydrodolichyl diphosphate synthase (DDS) complex, an essential component of the dolichol monophosphate (Dol-P) biosynthetic machinery. Both subunits contribute to enzymatic activity, i.e. condensation of multiple copies of isopentenyl pyrophosphate (IPP) to farnesyl pyrophosphate (FPP) to produce dehydrodolichyl diphosphate (Dedol-PP), a precursor of dolichol phosphate which is utilized as a sugar carrier in protein glycosylation in the endoplasmic reticulum (ER). Synthesizes long-chain polyprenols, mostly of C95 and C100 chain length. Regulates the glycosylation and stability of nascent NPC2, thereby promoting trafficking of LDL-derived cholesterol. Acts as a specific receptor for the N-terminus of Nogo-B, a neural and cardiovascular regulator. The chain is Dehydrodolichyl diphosphate synthase complex subunit Nus1 from Mus musculus (Mouse).